A 266-amino-acid chain; its full sequence is Phosphatidylglycerol--prolipoprotein diacylglyceryl transferase (266 aa).

The next 7 membrane-spanning stretches (helical) occupy residues 17–37 (LKIHWYGLMYLIGIGGAWLLA), 56–76 (LVFWVACGVILGGRLGYVLFY), 92–112 (WKGGMSFHGGLLGVMLAVWWF), 120–140 (FFQLMDFIAPLVPIGLGAGRI), 171–191 (PSQLYQFALEGVALFVILWLF), 199–219 (ASVSGLFVLCYGIFRFVVEFV), and 233–253 (WLTMGQVLCVPMVLAGIALMV). R139 lines the a 1,2-diacyl-sn-glycero-3-phospho-(1'-sn-glycerol) pocket.

Belongs to the Lgt family.

It localises to the cell inner membrane. It carries out the reaction L-cysteinyl-[prolipoprotein] + a 1,2-diacyl-sn-glycero-3-phospho-(1'-sn-glycerol) = an S-1,2-diacyl-sn-glyceryl-L-cysteinyl-[prolipoprotein] + sn-glycerol 1-phosphate + H(+). It functions in the pathway protein modification; lipoprotein biosynthesis (diacylglyceryl transfer). In terms of biological role, catalyzes the transfer of the diacylglyceryl group from phosphatidylglycerol to the sulfhydryl group of the N-terminal cysteine of a prolipoprotein, the first step in the formation of mature lipoproteins. This is Phosphatidylglycerol--prolipoprotein diacylglyceryl transferase from Pseudomonas aeruginosa (strain UCBPP-PA14).